The following is a 388-amino-acid chain: Probable proton-coupled zinc antiporter SLC30A3 (388 aa).

The segment at 1 to 42 is disordered; the sequence is MEPSPASGGSETTRLVSPRDRSSAGGGLRLKSLFTEPSEPLP. Over 1-75 the chain is Cytoplasmic; that stretch reads MEPSPASGGS…SPERAQARRQ (75 aa). Phosphoserine occurs at positions 63 and 66. Residues 76 to 96 traverse the membrane as a helical segment; it reads LYAACVVCFIFMAGEVVGGYL. The Lumenal segment spans residues 97-105; sequence AHSLAIMTD. A helical membrane pass occupies residues 106–126; sequence AAHLLADIGSMMASLFSLWLS. Residues His-108 and Asp-112 each coordinate Zn(2+). At 127–145 the chain is on the cytoplasmic side; that stretch reads TRPATRTMTFGWHRSETLG. A helical membrane pass occupies residues 146-166; sequence ALASVVSLWIVTGILLYLAFL. Residues 167–177 are Lumenal-facing; sequence RLLHSDYHIEA. The helical transmembrane segment at 178-198 threads the bilayer; sequence GAMLLTASIAVCANMIMAFVL. Residues 199-235 are Cytoplasmic-facing; it reads HQTGAPHSHGPRGAEYAPLEEGHGHPLSLGNTSVRAA. A helical transmembrane segment spans residues 236–256; that stretch reads FVHVLGDLLQSLGVLAASILI. Zn(2+) is bound by residues His-238 and Asp-242. Residues 257-263 lie on the Lumenal side of the membrane; sequence YFKPQYK. A helical membrane pass occupies residues 264 to 284; the sequence is VADPISTFLFSICALGSTAPT. Over 285-388 the chain is Cytoplasmic; that stretch reads LRDVLLVLME…CLRCREPPKA (104 aa).

The protein belongs to the cation diffusion facilitator (CDF) transporter (TC 2.A.4) family. SLC30A subfamily. Homodimer. Homodimerization could regulate efficiency of zinc transport. Interacts with TMEM163.

It localises to the cytoplasmic vesicle. The protein localises to the secretory vesicle. The protein resides in the synaptic vesicle membrane. Its subcellular location is the synapse. It is found in the synaptosome. It localises to the late endosome membrane. The protein localises to the lysosome membrane. The enzyme catalyses Zn(2+)(in) + 2 H(+)(out) = Zn(2+)(out) + 2 H(+)(in). In terms of biological role, probable proton-coupled zinc ion antiporter mediating the import of zinc from cytoplasm into synaptic vesicles and participating to cellular zinc ion homeostasis in the brain. This is Probable proton-coupled zinc antiporter SLC30A3 from Rattus norvegicus (Rat).